The sequence spans 315 residues: Transcriptional regulator protein Pur-beta (315 aa).

The interval 1–39 (MADGDSGSERGGGGPGSFQPAPRGGGGPGGEQETQELAS) is disordered. The residue at position 2 (Ala-2) is an N-acetylalanine. Phosphoserine is present on residues Ser-6 and Ser-8. At Arg-23 the chain carries Omega-N-methylarginine. Residues 28–254 (PGGEQETQEL…GVFLRVSEVK (227 aa)) form a DNA-binding region. Phosphothreonine is present on Thr-34. Ser-104 carries the phosphoserine modification. Residue Arg-155 is modified to Omega-N-methylarginine. Positions 200–220 (DDELAGGPGGGAGGPGGGLYG) are disordered. Residues 205 to 219 (GGPGGGAGGPGGGLY) are compositionally biased toward gly residues. The residue at position 270 (Lys-270) is an N6-acetyllysine. Over residues 288–298 (RQRDKLYERRG) the composition is skewed to basic and acidic residues. The segment at 288–315 (RQRDKLYERRGGGSGGGDESEGEEVDED) is disordered. An Omega-N-methylarginine modification is found at Arg-297. Residues Ser-301 and Ser-307 each carry the phosphoserine modification. Acidic residues predominate over residues 305-315 (DESEGEEVDED).

This sequence belongs to the PUR DNA-binding protein family. As to quaternary structure, homodimer, heterodimer with PURA and heterotrimer with PURA and YBX1/Y-box protein 1. Interacts with MYOCD and SRF. Expressed in muscle cells and in the liver.

It localises to the nucleus. Functionally, transcriptional regulator which can act as an activator or a repressor. Represses the transcription of ACTA2 in fibroblasts and smooth muscle cells via its ability to interact with the purine-rich strand of a MCAT- containing element in the 5' flanking region of the gene. Represses the transcription of MYOCD, capable of repressing all isoforms of MYOCD but the magnitude of the repressive effects is most notable for the SMC- specific isoforms. Promotes hepatic glucose production by activating the transcription of ADCY6, leading to cAMP accumulation, increased PKA activity, CREB activation, and increased transcription of PCK1 and G6PC genes. Has capacity to bind repeated elements in single-stranded DNA such as the purine-rich single strand of the PUR element located upstream of the MYC gene. Participates in transcriptional and translational regulation of alpha-MHC expression in cardiac myocytes by binding to the purine-rich negative regulatory (PNR) element. Modulates constitutive liver galectin-3 gene transcription by binding to its promoter. May play a role in the dendritic transport of a subset of mRNAs. In Rattus norvegicus (Rat), this protein is Transcriptional regulator protein Pur-beta (Purb).